A 334-amino-acid chain; its full sequence is Methionine adenosyltransferase 2 subunit beta (334 aa).

NADP(+) is bound by residues 37–40, 60–62, 71–72, cysteine 93, arginine 97, and tyrosine 159; these read TGLL, YSR, and NL. The required for interaction with MAT2A stretch occupies residues 319-334; sequence LWPFLVDKRWRQTVFH.

Belongs to the dTDP-4-dehydrorhamnose reductase family. MAT2B subfamily. Heterotrimer; composed of a catalytic mat2a homodimer that binds one regulatory mat2b chain. Heterohexamer; composed of a central, catalytic mat2a homotetramer flanked on either side by a regulatory mat2b chain. NADP binding increases the affinity for mat2a.

Its pathway is amino-acid biosynthesis; S-adenosyl-L-methionine biosynthesis; S-adenosyl-L-methionine from L-methionine: step 1/1. Functionally, regulatory subunit of S-adenosylmethionine synthetase 2, an enzyme that catalyzes the formation of S-adenosylmethionine from methionine and ATP. Regulates MAT2A catalytic activity by changing its kinetic properties, increasing its affinity for L-methionine. Can bind NADP (in vitro). The sequence is that of Methionine adenosyltransferase 2 subunit beta (mat2b) from Xenopus laevis (African clawed frog).